The following is a 461-amino-acid chain: GTPase Der (461 aa).

2 EngA-type G domains span residues 2–164 (QSII…NENF) and 197–369 (IKVG…ANFT). GTP is bound by residues 8 to 15 (GKPNVGKS), 55 to 59 (DSGGL), 116 to 119 (NKID), 203 to 210 (GRVNVGKS), 250 to 254 (DTAGI), and 314 to 317 (NKWD). Residues 370–454 (QKIPTAKLNA…PLIIVSRKKG (85 aa)) enclose the KH-like domain.

It belongs to the TRAFAC class TrmE-Era-EngA-EngB-Septin-like GTPase superfamily. EngA (Der) GTPase family. Associates with the 50S ribosomal subunit.

GTPase that plays an essential role in the late steps of ribosome biogenesis. The chain is GTPase Der from Campylobacter lari (strain RM2100 / D67 / ATCC BAA-1060).